A 432-amino-acid polypeptide reads, in one-letter code: Probable protein phosphatase 2C 33 (432 aa).

Residues 27–298 form the PPM-type phosphatase domain; that stretch reads GGGSERPLVR…DDTTCVVVDI (272 aa). 4 residues coordinate Mn(2+): Asp74, Gly75, Asp250, and Asp289.

This sequence belongs to the PP2C family. The cofactor is Mg(2+). Mn(2+) is required as a cofactor.

It catalyses the reaction O-phospho-L-seryl-[protein] + H2O = L-seryl-[protein] + phosphate. It carries out the reaction O-phospho-L-threonyl-[protein] + H2O = L-threonyl-[protein] + phosphate. This Oryza sativa subsp. japonica (Rice) protein is Probable protein phosphatase 2C 33.